A 340-amino-acid chain; its full sequence is Quinic acid degradation cluster protein x (340 aa).

Glu-90, Asp-115, Leu-117, Asp-118, and Asp-262 together coordinate Mg(2+). Glu-90 provides a ligand contact to substrate. Residues 117 to 120 and Asp-262 each bind substrate; that span reads LDGT.

Belongs to the inositol monophosphatase superfamily.

Functionally, part of the qa gene cluster that mediates the catabolism of quinic acid (QA) and as such, allows the use of QA as a sole carbon source. Its function within the pathway has not been determined yet but it probably plays a regulatory role. The qa cluster encodes 3 inducible enymes (qa-2, qa-3 and qa-4) catalyzing the first three reactions in the catabolism of quinic acid to protocatechuic acid (also known as 3,4-Dihydroxybenzoic acid). This is Quinic acid degradation cluster protein x from Neurospora crassa (strain ATCC 24698 / 74-OR23-1A / CBS 708.71 / DSM 1257 / FGSC 987).